The sequence spans 635 residues: ADP-ribosylation factor-binding protein GGA1 (635 aa).

M1 is subject to N-acetylmethionine. Positions 17–147 (ATNPLNKELN…MLKKQGIVKS (131 aa)) constitute a VHS domain. The segment at 114 to 273 (KILELLYSWT…RLASDTEDND (160 aa)) is interaction with ARF3. A GAT domain is found at 171 to 298 (DEEKSKMLAR…VINLYKQLVR (128 aa)). The residue at position 185 (S185) is a Phosphoserine. The unstructured hinge stretch occupies residues 299-505 (GEEVNGDATA…ITVPLESIKP (207 aa)). Positions 305–349 (DATASSIPGSTSALLDLSGLDLPPPGTTQPATPTRPGNQSSPEQL) are disordered. Positions 313 to 325 (GSTSALLDLSGLD) are enriched in low complexity. Phosphoserine is present on S354. The short motif at 357-361 (DDELM) is the Autoinhibitory element. 2 disordered regions span residues 362 to 422 (SLGL…LDDL) and 455 to 490 (RDLQ…TPTE). Over residues 383 to 393 (NFQSSDGTESS) the composition is skewed to polar residues. S417 bears the Phosphoserine mark. Over residues 459 to 476 (SKSSSPSPGAASLLHTTS) the composition is skewed to low complexity. Residues 477–486 (PEPPGPPPQA) show a composition bias toward pro residues. Residues 506 to 627 (SSILPVTVYD…NEMGDVDQFP (122 aa)) enclose the GAE domain.

This sequence belongs to the GGA protein family. In terms of assembly, monomer. Interacts with GGA2 and GGA3. Binds to clathrin and activated ARFs, including ARF1, ARF5 and ARF6. Interacts with RABEP1 and RABGEF1. Interacts with the type-I membrane proteins LRP3, M6PR/CD-MPR and IGF2R/CI-MPR. Interacts (via N-terminal VHS domain) with SORL1/sorLA and SORT1 (via C-terminal cytosolic domain). Interacts with EPN4. Interacts with CCDC91. Interacts with HEATR5B/p200a. Interacts with SYNRG/gamma-synergin. Interacts (via GAE doamin) with NECAP1 and NECAP2. Interacts (via GAE domain) with AFTPH/aftiphilin. Interacts with TSG101 and UBC. Interacts with RNF11. Interacts (via VHS domain) with BACE1 (via DXXLL motif); the interaction highly increases when BACE1 is phosphorylated at 'Ser-498'. Interacts with CNST. Interacts with ADRA2B. Interacts with ARL3; the interaction recruits, in collaboration with RABEP1, PKD1:PKD2 complex to trans-Golgi network and is required for ciliary targeting. In terms of processing, phosphorylated by CK2 and dephosphorylated by PP2A. Phosphorylation of GGA1 allows the internal DXXLL motif to bind the VHS domain and to inhibit the recognition of cargo signals. Ubiquitinated.

Its subcellular location is the golgi apparatus. It localises to the trans-Golgi network membrane. The protein resides in the endosome membrane. The protein localises to the early endosome membrane. Its function is as follows. Plays a role in protein sorting and trafficking between the trans-Golgi network (TGN) and endosomes. Mediates the ARF-dependent recruitment of clathrin to the TGN and binds ubiquitinated proteins and membrane cargo molecules with a cytosolic acidic cluster-dileucine (DXXLL) motif. Mediates export of the GPCR receptor ADRA2B to the cell surface. Required for targeting PKD1:PKD2 complex from the trans-Golgi network to the cilium membrane. Regulates retrograde transport of proteins such as phosphorylated form of BACE1 from endosomes to the trans-Golgi network. The protein is ADP-ribosylation factor-binding protein GGA1 (Gga1) of Mus musculus (Mouse).